Consider the following 265-residue polypeptide: 4-hydroxy-tetrahydrodipicolinate reductase (265 aa).

9 to 14 (GPRGRM) serves as a coordination point for NAD(+). Position 37 (arginine 37) interacts with NADP(+). NAD(+)-binding positions include 98–100 (GTT) and 124–127 (APNF). Residue histidine 154 is the Proton donor/acceptor of the active site. (S)-2,3,4,5-tetrahydrodipicolinate is bound at residue histidine 155. Catalysis depends on lysine 158, which acts as the Proton donor. 164-165 (GT) serves as a coordination point for (S)-2,3,4,5-tetrahydrodipicolinate.

The protein belongs to the DapB family.

It is found in the cytoplasm. It catalyses the reaction (S)-2,3,4,5-tetrahydrodipicolinate + NAD(+) + H2O = (2S,4S)-4-hydroxy-2,3,4,5-tetrahydrodipicolinate + NADH + H(+). The enzyme catalyses (S)-2,3,4,5-tetrahydrodipicolinate + NADP(+) + H2O = (2S,4S)-4-hydroxy-2,3,4,5-tetrahydrodipicolinate + NADPH + H(+). It participates in amino-acid biosynthesis; L-lysine biosynthesis via DAP pathway; (S)-tetrahydrodipicolinate from L-aspartate: step 4/4. Its function is as follows. Catalyzes the conversion of 4-hydroxy-tetrahydrodipicolinate (HTPA) to tetrahydrodipicolinate. The polypeptide is 4-hydroxy-tetrahydrodipicolinate reductase (Geobacillus thermodenitrificans (strain NG80-2)).